The sequence spans 275 residues: Large ribosomal subunit protein uL2 (275 aa).

Disordered regions lie at residues 1–24 and 208–275; these read MGIR…FSEI and AGRT…RRRR. Residues 12–22 show a composition bias toward polar residues; sequence GTRQATVSDFS. Basic residues-rich tracts occupy residues 208 to 219 and 255 to 275; these read AGRTRHLGRRPQ and LGKK…RRRR.

This sequence belongs to the universal ribosomal protein uL2 family. Part of the 50S ribosomal subunit. Forms a bridge to the 30S subunit in the 70S ribosome.

Its function is as follows. One of the primary rRNA binding proteins. Required for association of the 30S and 50S subunits to form the 70S ribosome, for tRNA binding and peptide bond formation. It has been suggested to have peptidyltransferase activity; this is somewhat controversial. Makes several contacts with the 16S rRNA in the 70S ribosome. The chain is Large ribosomal subunit protein uL2 from Picosynechococcus sp. (strain ATCC 27264 / PCC 7002 / PR-6) (Agmenellum quadruplicatum).